Reading from the N-terminus, the 249-residue chain is Leucyl/phenylalanyl-tRNA--protein transferase (249 aa).

The disordered stretch occupies residues M1 to E21.

Belongs to the L/F-transferase family.

Its subcellular location is the cytoplasm. It carries out the reaction N-terminal L-lysyl-[protein] + L-leucyl-tRNA(Leu) = N-terminal L-leucyl-L-lysyl-[protein] + tRNA(Leu) + H(+). It catalyses the reaction N-terminal L-arginyl-[protein] + L-leucyl-tRNA(Leu) = N-terminal L-leucyl-L-arginyl-[protein] + tRNA(Leu) + H(+). The catalysed reaction is L-phenylalanyl-tRNA(Phe) + an N-terminal L-alpha-aminoacyl-[protein] = an N-terminal L-phenylalanyl-L-alpha-aminoacyl-[protein] + tRNA(Phe). Its function is as follows. Functions in the N-end rule pathway of protein degradation where it conjugates Leu, Phe and, less efficiently, Met from aminoacyl-tRNAs to the N-termini of proteins containing an N-terminal arginine or lysine. This Xanthomonas campestris pv. campestris (strain 8004) protein is Leucyl/phenylalanyl-tRNA--protein transferase.